A 527-amino-acid chain; its full sequence is MAPERLRSRALSAFKLRGLLLRGEAIKYLTEALQSISELELEDKLEKIINAVEKQPLSSNMIERSVVEAAVQECSQSVDETIEHVFNIIGAFDIPRFVYNSERKKFLPLLMTNHPAPNLFGTPRDKAEMFRERYTILHQRTHRHELFTPPVIGSHPDESGSKFQLKTIETLLGSTTKIGDAIVLGMITQLKEGKFFLEDPTGTVQLDLSKAQFHSGLYTEACFVLAEGWFEDQVFHVNAFGFPPTEPSSTTRAYYGNINFFGGPSNTSVKTSAKLKQLEEENKDAMFVFLSDVWLDQVEVLEKLRIMFAGYSPAPPTCFILCGNFSSAPYGKNQVQALKDSLKTLADIICEYPDIHQSSRFVFVPGPEDPGFGSILPRPPLAESITNEFRQRVPFSVFTTNPCRIQYCTQEITVFREDLVNKMCRNCVRFPSSNLAIPNHFVKTILSQGHLTPLPLYVCPVYWAYDYALRVYPVPDLLVIADKYDPFTTTNTECLCINPGSFPRSGFSFKVFYPSNKTVEDSKLQGF.

Belongs to the DNA polymerase epsilon subunit B family. In terms of assembly, component of the DNA polymerase epsilon complex consisting of four subunits: the catalytic subunit POLE and the accessory subunits POLE2, POLE3 and POLE4.

It is found in the nucleus. Functionally, accessory component of the DNA polymerase epsilon complex. Participates in DNA repair and in chromosomal DNA replication. This is DNA polymerase epsilon subunit 2 from Homo sapiens (Human).